The chain runs to 224 residues: Tumor protein D52 (224 aa).

Residues 29–53 form a disordered region; the sequence is LSPSGNTSPPGSPTQNVGLLKTEPV. A Phosphothreonine modification is found at threonine 35. Serine 36 and serine 40 each carry phosphoserine. Positions 61–113 form a coiled coil; it reads VTMLSAPEALTEEEQEELRRELTKVEEEIQTLSQVLAAKEKHLAELKRKLGIS. Phosphoserine is present on residues threonine 138, serine 175, and serine 223. The segment at 186 to 224 is disordered; sequence KVGGAKPAGGDFGEVLNSTANATSTMTTEPPPEQMTESP. Residues 202–224 are compositionally biased toward low complexity; it reads NSTANATSTMTTEPPPEQMTESP.

This sequence belongs to the TPD52 family. In terms of assembly, forms a homodimer or heterodimer with other members of the family. Isoform 2 is expressed at higher levels in kidney and brain than in liver, lung, testis and heart. Within the brain, isoform 2 is highly expressed in the granular layer of the cerebellum, the cortex and the hippocampus. In embryos, isoform 2 is expressed in the epithelium of the developing intestine, stomach, olfactory epithelium, neuronal layers of the retina, salivary gland, kidney and dorsal root ganglion.

This Mus musculus (Mouse) protein is Tumor protein D52 (Tpd52).